Consider the following 888-residue polypeptide: Isoleucine--tRNA ligase (888 aa).

Residues 61–71 carry the 'HIGH' region motif; sequence PYANGSIHIGH. Residue Glu-551 coordinates L-isoleucyl-5'-AMP. The short motif at 592–596 is the 'KMSKS' region element; the sequence is KMSKQ. Lys-595 contributes to the ATP binding site. Zn(2+)-binding residues include Cys-862, Cys-865, Cys-879, and Cys-882.

The protein belongs to the class-I aminoacyl-tRNA synthetase family. IleS type 1 subfamily. As to quaternary structure, monomer. The cofactor is Zn(2+).

It localises to the cytoplasm. It carries out the reaction tRNA(Ile) + L-isoleucine + ATP = L-isoleucyl-tRNA(Ile) + AMP + diphosphate. Catalyzes the attachment of isoleucine to tRNA(Ile). As IleRS can inadvertently accommodate and process structurally similar amino acids such as valine, to avoid such errors it has two additional distinct tRNA(Ile)-dependent editing activities. One activity is designated as 'pretransfer' editing and involves the hydrolysis of activated Val-AMP. The other activity is designated 'posttransfer' editing and involves deacylation of mischarged Val-tRNA(Ile). The polypeptide is Isoleucine--tRNA ligase (Mycoplasmopsis pulmonis (strain UAB CTIP) (Mycoplasma pulmonis)).